The chain runs to 384 residues: Mitogen-activated protein kinase homolog 1 (384 aa).

The Protein kinase domain maps to Tyr32–Met319. ATP is bound by residues Ile38–Val46 and Lys61. The Proton acceptor role is filled by Asp158. The residue at position 191 (Thr191) is a Phosphothreonine. Positions Thr191–Tyr193 match the TXY motif. Tyr193 carries the phosphotyrosine modification.

This sequence belongs to the protein kinase superfamily. CMGC Ser/Thr protein kinase family. MAP kinase subfamily. The cofactor is Mg(2+). In terms of processing, dually phosphorylated on Thr-191 and Tyr-193, which activates the enzyme. As to expression, expressed in vegetative organs such as leaf, root, or stem. In the reproductive organs, it is found in the ovary, but not in the stamen.

The enzyme catalyses L-seryl-[protein] + ATP = O-phospho-L-seryl-[protein] + ADP + H(+). It carries out the reaction L-threonyl-[protein] + ATP = O-phospho-L-threonyl-[protein] + ADP + H(+). Activated by tyrosine and threonine phosphorylation. The protein is Mitogen-activated protein kinase homolog 1 (MPK1) of Petunia hybrida (Petunia).